A 644-amino-acid polypeptide reads, in one-letter code: MYSLGNQVKAMVITLRDGTKREFEKGITVYEIAKSISDKLAREAVGGKFNGKIVELNTKIEEDGELEILTFEDEEGKKIYWHTSSHILAQAVKRLFKDVKLAIGPAIDNGFYYDFDTERPFTTEDFEAIEEEMNKIIKEDYKLERFVLSKEEAIKFMKEKDEPYKVELIEEIPEGEEISFYKQGEFVDLCAGPHLPSTGMVKAIKLLSVAGAYWKGDEKNKMLQRIYGISFPKKSMLDEYLHMMEEAKKRDHRKLGKELDLFSIHPEGPGFPFFHPKGMIIRNILEDFWRKEHIKRGYQEIRTPIILNEELWKRSGHWDHYKENMYFTEIDGQTYAIKPMNCPGAMLVYKSTLRSYRDLPLRLCELGLVHRHELSGVLHGLMRVRSFTQDDAHLFMTPEQVEDEILGVINLVDYFYKIFGFEYHVELSTRPENSMGTDEEWELATNALISALKRANLPYKVNEGEGAFYGPKIDFHLKDSIGRTWQCGTIQLDFQMPERFELEYIGPDGEKHRPIMLHRVIYGSIERFIGILTEHFAGAFPTWLAPVQVRVLPISEKHHEYARKVYERLQEHDIRVELDDRNEKIGYKIREAQLQKIPYMLIVGDREVEEGNVSLRSRKDGDLGPISLDNFIEKILKEIATKAL.

Residues 8–70 (VKAMVITLRD…EEDGELEILT (63 aa)) form the TGS domain. A catalytic region spans residues 251 to 541 (DHRKLGKELD…LTEHFAGAFP (291 aa)). Zn(2+)-binding residues include Cys-342, His-393, and His-518.

It belongs to the class-II aminoacyl-tRNA synthetase family. In terms of assembly, homodimer. Zn(2+) is required as a cofactor.

Its subcellular location is the cytoplasm. It carries out the reaction tRNA(Thr) + L-threonine + ATP = L-threonyl-tRNA(Thr) + AMP + diphosphate + H(+). Catalyzes the attachment of threonine to tRNA(Thr) in a two-step reaction: L-threonine is first activated by ATP to form Thr-AMP and then transferred to the acceptor end of tRNA(Thr). Also edits incorrectly charged L-seryl-tRNA(Thr). The polypeptide is Threonine--tRNA ligase (Caldanaerobacter subterraneus subsp. tengcongensis (strain DSM 15242 / JCM 11007 / NBRC 100824 / MB4) (Thermoanaerobacter tengcongensis)).